The chain runs to 248 residues: Exosome complex component Rrp41 (248 aa).

This sequence belongs to the RNase PH family. Rrp41 subfamily. As to quaternary structure, component of the archaeal exosome complex. Forms a hexameric ring-like arrangement composed of 3 Rrp41-Rrp42 heterodimers. The hexameric ring associates with a trimer of Rrp4 and/or Csl4 subunits.

The protein localises to the cytoplasm. Catalytic component of the exosome, which is a complex involved in RNA degradation. Has 3'-&gt;5' exoribonuclease activity. Can also synthesize heteromeric RNA-tails. The sequence is that of Exosome complex component Rrp41 from Thermoplasma volcanium (strain ATCC 51530 / DSM 4299 / JCM 9571 / NBRC 15438 / GSS1).